An 824-amino-acid chain; its full sequence is Disintegrin and metalloproteinase domain-containing protein 8 (824 aa).

The first 16 residues, 1–16 (MRGLGLWLLGAMMLPA), serve as a signal peptide directing secretion. The Extracellular segment spans residues 17-655 (IAPSRPWALM…EVHAASGSLP (639 aa)). N-linked (GlcNAc...) asparagine glycans are attached at residues asparagine 67 and asparagine 91. One can recognise a Peptidase M12B domain in the interval 200–400 (RYVELYVVVD…PQSVCLANAP (201 aa)). Disulfide bonds link cysteine 310–cysteine 395, cysteine 351–cysteine 379, cysteine 353–cysteine 362, cysteine 435–cysteine 457, cysteine 448–cysteine 454, cysteine 466–cysteine 486, cysteine 473–cysteine 503, cysteine 498–cysteine 508, cysteine 566–cysteine 613, cysteine 613–cysteine 623, cysteine 617–cysteine 629, and cysteine 631–cysteine 640. A Zn(2+)-binding site is contributed by histidine 334. Glutamate 335 is a catalytic residue. Histidine 338 and histidine 344 together coordinate Zn(2+). The region spanning 408–494 (GPVCGNLFVE…ECPEDAFQEN (87 aa)) is the Disintegrin domain. A glycan (N-linked (GlcNAc...) asparagine) is linked at asparagine 436. Residues 609 to 641 (RSSNCSAQCHNHGVCNHKQECHCHAGWAPPHCA) enclose the EGF-like domain. Asparagine 612 carries an N-linked (GlcNAc...) asparagine glycan. Residues 656-676 (VFVVVVLVLLAVVLVTLAGII) traverse the membrane as a helical segment. The Cytoplasmic portion of the chain corresponds to 677-824 (VYRKARSRIL…KQGAGAPTAP (148 aa)). 2 disordered regions span residues 710 to 756 (VPAK…PVTV) and 776 to 824 (KPTF…PTAP). Residues 747 to 756 (RPPPAPPVTV) show a composition bias toward pro residues. Positions 788–804 (PGAGAANPGPAEGAVGP) are enriched in low complexity.

Interacts with FST3. It depends on Zn(2+) as a cofactor. As to expression, expressed on neutrophils and monocytes.

The protein localises to the membrane. Possible involvement in extravasation of leukocytes. The sequence is that of Disintegrin and metalloproteinase domain-containing protein 8 (ADAM8) from Homo sapiens (Human).